The chain runs to 1219 residues: MRSPRTRGRPGRPLSLLLALLCALRAKVCGASGQFELEILSMQNVNGELQNGNCCGGARNPGDRKCTRDECDTYFKVCLKEYQSRVTAGGPCSFGSGSTPVIGGNTFNLKASRGNDRNRIVLPFSFAWPRSYTLLVEAWDSSNDTIQPDSIIEKASHSGMINPSRQWQTLKQNTGIAHFEYQIRVTCDDHYYGFGCNKFCRPRDDFFGHYACDQNGNKTCMEGWMGPECNKAICRQGCSPKHGSCKLPGDCRCQYGWQGLYCDKCIPHPGCVHGTCNEPWQCLCETNWGGQLCDKDLNYCGTHQPCLNRGTCSNTGPDKYQCSCPEGYSGPNCEIAEHACLSDPCHNRGSCKETSSGFECECSPGWTGPTCSTNIDDCSPNNCSHGGTCQDLVNGFKCVCPPQWTGKTCQLDANECEAKPCVNARSCKNLIASYYCDCLPGWMGQNCDININDCLGQCQNDASCRDLVNGYRCICPPGYAGDHCERDIDECASNPCLNGGHCQNEINRFQCLCPTGFSGNLCQLDIDYCEPNPCQNGAQCYNRASDYFCKCPEDYEGKNCSHLKDHCRTTPCEVIDSCTVAMASNDTPEGVRYISSNVCGPHGKCKSESGGKFTCDCNKGFTGTYCHENINDCEGNPCTNGGTCIDGVNSYKCICSDGWEGAHCENNINDCSQNPCHYGGTCRDLVNDFYCDCKNGWKGKTCHSRDSQCDEATCNNGGTCYDEVDTFKCMCPGGWEGTTCNIARNSSCLPNPCHNGGTCVVNGDSFTCVCKEGWEGPICTQNTNDCSPHPCYNSGTCVDGDNWYRCECAPGFAGPDCRININECQSSPCAFGATCVDEINGYQCICPPGHSGAKCHEVSGRSCITMGRVILDGAKWDDDCNTCQCLNGRVACSKVWCGPRPCRLHKGHGECPNGQSCIPVLDDQCFVRPCTGAGECRSSSLQPVKTKCTSDSYYQDNCANITFTFNKEMMSPGLTTEHICSELRNLNILKNVSAEYSIYIACEPSLSANNEIHVAISAEDIRDDGNPVKEITDKIIDLVSKRDGNSSLIAAVAEVRVQRRPLKNRTDFLVPLLSSVLTVAWVCCLVTAFYWCVRKRRRKPSSHTHSAPEDNTTNNVREQLNQIKNPIEKHGANTVPIKDYENKNSKMSKIRTHNSEVEEDDMDKHQQKVRFAKQPVYTLVDREEKVPQRTPTKHPNWTNKQDNRDLESAQSLNRMEYIV.

The signal sequence occupies residues 1–33 (MRSPRTRGRPGRPLSLLLALLCALRAKVCGASG). Residues 34-1067 (QFELEILSMQ…QRRPLKNRTD (1034 aa)) are Extracellular-facing. Asn-143 carries an N-linked (GlcNAc...) asparagine glycan. The 45-residue stretch at 185–229 (VTCDDHYYGFGCNKFCRPRDDFFGHYACDQNGNKTCMEGWMGPEC) folds into the DSL domain. Intrachain disulfides connect Cys-187–Cys-196 and Cys-200–Cys-212. Positions 199–207 (FCRPRDDFF) are important for interaction with NOTCH1. N-linked (GlcNAc...) asparagine glycosylation is present at Asn-217. Intrachain disulfides connect Cys-220/Cys-229, Cys-234/Cys-245, Cys-238/Cys-251, Cys-253/Cys-262, Cys-265/Cys-276, Cys-271/Cys-282, Cys-284/Cys-293, Cys-300/Cys-312, Cys-306/Cys-322, Cys-324/Cys-333, Cys-340/Cys-351, Cys-345/Cys-360, Cys-362/Cys-371, Cys-378/Cys-389, Cys-383/Cys-398, Cys-400/Cys-409, Cys-416/Cys-427, Cys-421/Cys-436, Cys-438/Cys-447, Cys-454/Cys-464, Cys-458/Cys-473, Cys-475/Cys-484, Cys-491/Cys-502, Cys-496/Cys-511, Cys-513/Cys-522, Cys-529/Cys-540, Cys-534/Cys-549, Cys-551/Cys-560, Cys-578/Cys-605, Cys-599/Cys-615, Cys-617/Cys-626, Cys-633/Cys-644, Cys-638/Cys-653, Cys-655/Cys-664, Cys-671/Cys-682, Cys-676/Cys-691, Cys-693/Cys-702, Cys-709/Cys-720, Cys-714/Cys-729, and Cys-731/Cys-740. The EGF-like 1 domain maps to 230–263 (NKAICRQGCSPKHGSCKLPGDCRCQYGWQGLYCD). Residues 264–294 (KCIPHPGCVHGTCNEPWQCLCETNWGGQLCD) form the EGF-like 2; atypical domain. EGF-like domains are found at residues 296–334 (DLNY…PNCE) and 336–372 (AEHA…PTCS). The EGF-like 5; calcium-binding domain occupies 374–410 (NIDDCSPNNCSHGGTCQDLVNGFKCVCPPQWTGKTCQ). N-linked (GlcNAc...) asparagine glycosylation occurs at Asn-382. Residues 412 to 448 (DANECEAKPCVNARSCKNLIASYYCDCLPGWMGQNCD) form the EGF-like 6; calcium-binding domain. The region spanning 450–485 (NINDCLGQCQNDASCRDLVNGYRCICPPGYAGDHCE) is the EGF-like 7; calcium-binding domain. An EGF-like 8; calcium-binding domain is found at 487-523 (DIDECASNPCLNGGHCQNEINRFQCLCPTGFSGNLCQ). 2 consecutive EGF-like domains span residues 525–561 (DIDY…KNCS) and 586–627 (DTPE…TYCH). N-linked (GlcNAc...) asparagine glycosylation occurs at Asn-559. The EGF-like 11; calcium-binding domain maps to 629 to 665 (NINDCEGNPCTNGGTCIDGVNSYKCICSDGWEGAHCE). The 37-residue stretch at 667 to 703 (NINDCSQNPCHYGGTCRDLVNDFYCDCKNGWKGKTCH) folds into the EGF-like 12; calcium-binding domain. EGF-like domains follow at residues 705 to 741 (RDSQ…TTCN) and 744 to 780 (RNSS…PICT). The N-linked (GlcNAc...) asparagine glycan is linked to Asn-745. 11 cysteine pairs are disulfide-bonded: Cys-748-Cys-759, Cys-753-Cys-768, Cys-770-Cys-779, Cys-786-Cys-797, Cys-791-Cys-806, Cys-808-Cys-817, Cys-824-Cys-835, Cys-829-Cys-844, Cys-846-Cys-855, Cys-925-Cys-936, and Cys-948-Cys-958. Residues 782 to 818 (NTNDCSPHPCYNSGTCVDGDNWYRCECAPGFAGPDCR) enclose the EGF-like 15; calcium-binding domain. The EGF-like 16; calcium-binding domain occupies 820 to 856 (NINECQSSPCAFGATCVDEINGYQCICPPGHSGAKCH). 4 N-linked (GlcNAc...) asparagine glycosylation sites follow: Asn-960, Asn-991, Asn-1045, and Asn-1064. The chain crosses the membrane as a helical span at residues 1068–1093 (FLVPLLSSVLTVAWVCCLVTAFYWCV). At 1094–1219 (RKRRRKPSSH…QSLNRMEYIV (126 aa)) the chain is on the cytoplasmic side. The interval 1182-1219 (REEKVPQRTPTKHPNWTNKQDNRDLESAQSLNRMEYIV) is disordered. Positions 1189-1200 (RTPTKHPNWTNK) are enriched in polar residues.

In terms of assembly, interacts with NOTCH1. Interacts with NOTCH2 and NOTCH3. In terms of tissue distribution, widely expressed in a variety of tissues.

Its subcellular location is the membrane. It is found in the cell membrane. In terms of biological role, ligand for multiple Notch receptors and involved in the mediation of Notch signaling. May be involved in cell-fate decisions during hematopoiesis. Enhances fibroblast growth factor-induced angiogenesis (in vitro). Seems to be involved in early and late stages of mammalian cardiovascular development. Inhibits myoblast differentiation. May regulate fibroblast growth factor-induced angiogenesis. The polypeptide is Protein jagged-1 (Jag1) (Rattus norvegicus (Rat)).